Reading from the N-terminus, the 246-residue chain is 3-deoxy-manno-octulosonate cytidylyltransferase (246 aa).

Belongs to the KdsB family.

Its subcellular location is the cytoplasm. It carries out the reaction 3-deoxy-alpha-D-manno-oct-2-ulosonate + CTP = CMP-3-deoxy-beta-D-manno-octulosonate + diphosphate. The protein operates within nucleotide-sugar biosynthesis; CMP-3-deoxy-D-manno-octulosonate biosynthesis; CMP-3-deoxy-D-manno-octulosonate from 3-deoxy-D-manno-octulosonate and CTP: step 1/1. It participates in bacterial outer membrane biogenesis; lipopolysaccharide biosynthesis. In terms of biological role, activates KDO (a required 8-carbon sugar) for incorporation into bacterial lipopolysaccharide in Gram-negative bacteria. This is 3-deoxy-manno-octulosonate cytidylyltransferase from Leptospira borgpetersenii serovar Hardjo-bovis (strain JB197).